A 464-amino-acid chain; its full sequence is Ribulose bisphosphate carboxylase/oxygenase activase A, chloroplastic (464 aa).

The N-terminal 48 residues, M1–A48, are a transit peptide targeting the chloroplast. G155–S162 is an ATP binding site.

This sequence belongs to the RuBisCO activase family.

The protein resides in the plastid. The protein localises to the chloroplast stroma. Functionally, activation of RuBisCO (ribulose-1,5-bisphosphate carboxylase/oxygenase; EC 4.1.1.39) involves the ATP-dependent carboxylation of the epsilon-amino group of lysine leading to a carbamate structure. This chain is Ribulose bisphosphate carboxylase/oxygenase activase A, chloroplastic (RCAA), found in Hordeum vulgare (Barley).